The primary structure comprises 120 residues: NAD(P)H-quinone oxidoreductase subunit 3, chloroplastic (120 aa).

Helical transmembrane passes span 9–29, 64–84, and 88–108; these read IFWA…LISG, MFAL…PWAM, and VLGV…ILGL.

It belongs to the complex I subunit 3 family. As to quaternary structure, NDH is composed of at least 16 different subunits, 5 of which are encoded in the nucleus.

The protein localises to the plastid. It is found in the chloroplast thylakoid membrane. It carries out the reaction a plastoquinone + NADH + (n+1) H(+)(in) = a plastoquinol + NAD(+) + n H(+)(out). It catalyses the reaction a plastoquinone + NADPH + (n+1) H(+)(in) = a plastoquinol + NADP(+) + n H(+)(out). In terms of biological role, NDH shuttles electrons from NAD(P)H:plastoquinone, via FMN and iron-sulfur (Fe-S) centers, to quinones in the photosynthetic chain and possibly in a chloroplast respiratory chain. The immediate electron acceptor for the enzyme in this species is believed to be plastoquinone. Couples the redox reaction to proton translocation, and thus conserves the redox energy in a proton gradient. In Lobularia maritima (Sweet alyssum), this protein is NAD(P)H-quinone oxidoreductase subunit 3, chloroplastic.